The following is a 464-amino-acid chain: Cysteine--tRNA ligase (464 aa).

Residue cysteine 27 coordinates Zn(2+). The short motif at proline 29–histidine 39 is the 'HIGH' region element. Positions 203, 234, and 238 each coordinate Zn(2+). Positions lysine 266–serine 270 match the 'KMSKS' region motif. Position 269 (lysine 269) interacts with ATP.

It belongs to the class-I aminoacyl-tRNA synthetase family. As to quaternary structure, monomer. Requires Zn(2+) as cofactor.

It localises to the cytoplasm. It catalyses the reaction tRNA(Cys) + L-cysteine + ATP = L-cysteinyl-tRNA(Cys) + AMP + diphosphate. This is Cysteine--tRNA ligase from Campylobacter concisus (strain 13826).